Reading from the N-terminus, the 217-residue chain is MNQSLLAPFGTAIERVEAGLEALRQGQGVLVVDDEDRENEGDLIFAAESLTNAQMAMLIRECSGIVCLCLPDEKVKALELPPMVENNSSQYGTAFTVSIEAKVGVTTGVSAADRVTTIKAAIADNAKPSDLARPGHVYPLRAQPGGVLTRRGHTEGTIDLMQLAGLKPAGVLCEVTNPDGTMARLPEIIAFGAAHNMPVLTIEDIVVYRKSLLANVG.

D-ribulose 5-phosphate is bound by residues 37-38, aspartate 42, 150-154, and glutamate 174; these read RE and RRGHT. Glutamate 38 contributes to the Mg(2+) binding site. Histidine 153 lines the Mg(2+) pocket.

Belongs to the DHBP synthase family. As to quaternary structure, homodimer. Requires Mg(2+) as cofactor. The cofactor is Mn(2+).

It catalyses the reaction D-ribulose 5-phosphate = (2S)-2-hydroxy-3-oxobutyl phosphate + formate + H(+). It functions in the pathway cofactor biosynthesis; riboflavin biosynthesis; 2-hydroxy-3-oxobutyl phosphate from D-ribulose 5-phosphate: step 1/1. Its function is as follows. Catalyzes the conversion of D-ribulose 5-phosphate to formate and 3,4-dihydroxy-2-butanone 4-phosphate. This chain is 3,4-dihydroxy-2-butanone 4-phosphate synthase, found in Shewanella sp. (strain MR-4).